Here is a 260-residue protein sequence, read N- to C-terminus: Proteasome subunit alpha (260 aa).

It belongs to the peptidase T1A family. As to quaternary structure, the 20S proteasome core is composed of 14 alpha and 14 beta subunits that assemble into four stacked heptameric rings, resulting in a barrel-shaped structure. The two inner rings, each composed of seven catalytic beta subunits, are sandwiched by two outer rings, each composed of seven alpha subunits. The catalytic chamber with the active sites is on the inside of the barrel. Has a gated structure, the ends of the cylinder being occluded by the N-termini of the alpha-subunits. Is capped at one or both ends by the proteasome regulatory ATPase, PAN.

The protein localises to the cytoplasm. Its activity is regulated as follows. The formation of the proteasomal ATPase PAN-20S proteasome complex, via the docking of the C-termini of PAN into the intersubunit pockets in the alpha-rings, triggers opening of the gate for substrate entry. Interconversion between the open-gate and close-gate conformations leads to a dynamic regulation of the 20S proteasome proteolysis activity. Component of the proteasome core, a large protease complex with broad specificity involved in protein degradation. This is Proteasome subunit alpha from Pyrococcus abyssi (strain GE5 / Orsay).